Consider the following 541-residue polypeptide: ATP synthase subunit alpha (541 aa).

173–180 (GDRQTGKT) serves as a coordination point for ATP. A compositionally biased stretch (basic and acidic residues) spans 517 to 527 (GIEPGVEEHES). The tract at residues 517 to 541 (GIEPGVEEHESLGATAVNQETIVKK) is disordered. A compositionally biased stretch (polar residues) spans 532–541 (AVNQETIVKK).

The protein belongs to the ATPase alpha/beta chains family. In terms of assembly, F-type ATPases have 2 components, CF(1) - the catalytic core - and CF(0) - the membrane proton channel. CF(1) has five subunits: alpha(3), beta(3), gamma(1), delta(1), epsilon(1). CF(0) has three main subunits: a(1), b(2) and c(9-12). The alpha and beta chains form an alternating ring which encloses part of the gamma chain. CF(1) is attached to CF(0) by a central stalk formed by the gamma and epsilon chains, while a peripheral stalk is formed by the delta and b chains.

It localises to the cell membrane. It catalyses the reaction ATP + H2O + 4 H(+)(in) = ADP + phosphate + 5 H(+)(out). In terms of biological role, produces ATP from ADP in the presence of a proton gradient across the membrane. The alpha chain is a regulatory subunit. The polypeptide is ATP synthase subunit alpha (Kocuria rhizophila (strain ATCC 9341 / DSM 348 / NBRC 103217 / DC2201)).